Here is a 327-residue protein sequence, read N- to C-terminus: D-alanine--D-alanine ligase (327 aa).

In terms of domain architecture, ATP-grasp spans 113–312 (KRLWMTHDLS…YEDFVMQVVA (200 aa)). 139–194 (VADLGLPLIVKPAREGSSIGLSKVTDASQMREAFEKAAALDNDVIAETFIDGAELT) contributes to the ATP binding site. The Mg(2+) site is built by aspartate 266, glutamate 279, and asparagine 281.

Belongs to the D-alanine--D-alanine ligase family. Mg(2+) is required as a cofactor. Requires Mn(2+) as cofactor.

The protein localises to the cytoplasm. It catalyses the reaction 2 D-alanine + ATP = D-alanyl-D-alanine + ADP + phosphate + H(+). It participates in cell wall biogenesis; peptidoglycan biosynthesis. Functionally, cell wall formation. The polypeptide is D-alanine--D-alanine ligase (Cupriavidus pinatubonensis (strain JMP 134 / LMG 1197) (Cupriavidus necator (strain JMP 134))).